The sequence spans 121 residues: Large ribosomal subunit protein bL20 (121 aa).

Belongs to the bacterial ribosomal protein bL20 family.

Binds directly to 23S ribosomal RNA and is necessary for the in vitro assembly process of the 50S ribosomal subunit. It is not involved in the protein synthesizing functions of that subunit. In Wolbachia pipientis subsp. Culex pipiens (strain wPip), this protein is Large ribosomal subunit protein bL20.